Here is a 190-residue protein sequence, read N- to C-terminus: Segregation and condensation protein B (190 aa).

Belongs to the ScpB family. In terms of assembly, homodimer. Homodimerization may be required to stabilize the binding of ScpA to the Smc head domains. Component of a cohesin-like complex composed of ScpA, ScpB and the Smc homodimer, in which ScpA and ScpB bind to the head domain of Smc. The presence of the three proteins is required for the association of the complex with DNA.

It localises to the cytoplasm. Participates in chromosomal partition during cell division. May act via the formation of a condensin-like complex containing Smc and ScpA that pull DNA away from mid-cell into both cell halves. The protein is Segregation and condensation protein B of Bacillus cereus (strain ATCC 14579 / DSM 31 / CCUG 7414 / JCM 2152 / NBRC 15305 / NCIMB 9373 / NCTC 2599 / NRRL B-3711).